Here is a 329-residue protein sequence, read N- to C-terminus: Biotin synthase (329 aa).

One can recognise a Radical SAM core domain in the interval 38–262 (NTIQVSTLLS…IMPHSYIRLS (225 aa)). 3 residues coordinate [4Fe-4S] cluster: Cys53, Cys57, and Cys60. Positions 97, 128, 188, and 260 each coordinate [2Fe-2S] cluster.

It belongs to the radical SAM superfamily. Biotin synthase family. Homodimer. Requires [4Fe-4S] cluster as cofactor. [2Fe-2S] cluster is required as a cofactor.

The catalysed reaction is (4R,5S)-dethiobiotin + (sulfur carrier)-SH + 2 reduced [2Fe-2S]-[ferredoxin] + 2 S-adenosyl-L-methionine = (sulfur carrier)-H + biotin + 2 5'-deoxyadenosine + 2 L-methionine + 2 oxidized [2Fe-2S]-[ferredoxin]. It participates in cofactor biosynthesis; biotin biosynthesis; biotin from 7,8-diaminononanoate: step 2/2. Its function is as follows. Catalyzes the conversion of dethiobiotin (DTB) to biotin by the insertion of a sulfur atom into dethiobiotin via a radical-based mechanism. The sequence is that of Biotin synthase from Acinetobacter calcoaceticus.